The sequence spans 168 residues: UPF0134 protein MPN_524 (168 aa).

Belongs to the UPF0134 family.

This Mycoplasma pneumoniae (strain ATCC 29342 / M129 / Subtype 1) (Mycoplasmoides pneumoniae) protein is UPF0134 protein MPN_524.